A 129-amino-acid chain; its full sequence is NADH-ubiquinone oxidoreductase chain 3 (129 aa).

3 consecutive transmembrane segments (helical) span residues 4–24 (FYMY…WLLA), 48–68 (AAFS…DLEI), and 82–102 (GLYG…AFIL).

Belongs to the complex I subunit 3 family.

Its subcellular location is the mitochondrion membrane. The catalysed reaction is a ubiquinone + NADH + 5 H(+)(in) = a ubiquinol + NAD(+) + 4 H(+)(out). In terms of biological role, core subunit of the mitochondrial membrane respiratory chain NADH dehydrogenase (Complex I) that is believed to belong to the minimal assembly required for catalysis. Complex I functions in the transfer of electrons from NADH to the respiratory chain. The immediate electron acceptor for the enzyme is believed to be ubiquinone. This Candida albicans (strain SC5314 / ATCC MYA-2876) (Yeast) protein is NADH-ubiquinone oxidoreductase chain 3 (NAD3).